The chain runs to 298 residues: Probable phosphoserine phosphatase (298 aa).

The active-site Nucleophile is Asp-82. Positions 82 and 84 each coordinate Mg(2+). The active-site Proton donor is the Asp-84. Residues Glu-91, Arg-127, 170–171, and Lys-217 contribute to the substrate site; that span reads SG. A Mg(2+)-binding site is contributed by Asp-240. Position 243 (Asn-243) interacts with substrate.

It belongs to the HAD-like hydrolase superfamily. SerB family. The cofactor is Mg(2+).

The enzyme catalyses O-phospho-L-serine + H2O = L-serine + phosphate. It carries out the reaction O-phospho-D-serine + H2O = D-serine + phosphate. It participates in amino-acid biosynthesis; L-serine biosynthesis; L-serine from 3-phospho-D-glycerate: step 3/3. This chain is Probable phosphoserine phosphatase, found in Schizosaccharomyces pombe (strain 972 / ATCC 24843) (Fission yeast).